Consider the following 518-residue polypeptide: Probable Xaa-Pro aminopeptidase HCDG_07916 (518 aa).

Mn(2+) is bound by residues D289, D300, E437, and E475.

Belongs to the peptidase M24B family. It depends on Mn(2+) as a cofactor.

It carries out the reaction Release of any N-terminal amino acid, including proline, that is linked to proline, even from a dipeptide or tripeptide.. Its function is as follows. Catalyzes the removal of a penultimate prolyl residue from the N-termini of peptides. The polypeptide is Probable Xaa-Pro aminopeptidase HCDG_07916 (Ajellomyces capsulatus (strain H143) (Darling's disease fungus)).